The following is a 104-amino-acid chain: Turripeptide OL55 (104 aa).

In terms of processing, contains 8 disulfide bonds. In terms of tissue distribution, expressed by the venom duct.

The protein localises to the secreted. Acts as a neurotoxin by inhibiting an ion channel. This Iotyrris olangoensis (Sea snail) protein is Turripeptide OL55.